Consider the following 92-residue polypeptide: Small ribosomal subunit protein uS19c (92 aa).

This sequence belongs to the universal ribosomal protein uS19 family.

The protein resides in the plastid. It is found in the chloroplast. Protein S19 forms a complex with S13 that binds strongly to the 16S ribosomal RNA. In Phaseolus angularis (Azuki bean), this protein is Small ribosomal subunit protein uS19c.